Consider the following 243-residue polypeptide: Ubiquinone/menaquinone biosynthesis C-methyltransferase UbiE (243 aa).

S-adenosyl-L-methionine contacts are provided by residues T69, D90, and 116 to 117; that span reads DA.

Belongs to the class I-like SAM-binding methyltransferase superfamily. MenG/UbiE family.

It carries out the reaction a 2-demethylmenaquinol + S-adenosyl-L-methionine = a menaquinol + S-adenosyl-L-homocysteine + H(+). The enzyme catalyses a 2-methoxy-6-(all-trans-polyprenyl)benzene-1,4-diol + S-adenosyl-L-methionine = a 5-methoxy-2-methyl-3-(all-trans-polyprenyl)benzene-1,4-diol + S-adenosyl-L-homocysteine + H(+). Its pathway is quinol/quinone metabolism; menaquinone biosynthesis; menaquinol from 1,4-dihydroxy-2-naphthoate: step 2/2. The protein operates within cofactor biosynthesis; ubiquinone biosynthesis. Methyltransferase required for the conversion of demethylmenaquinol (DMKH2) to menaquinol (MKH2) and the conversion of 2-polyprenyl-6-methoxy-1,4-benzoquinol (DDMQH2) to 2-polyprenyl-3-methyl-6-methoxy-1,4-benzoquinol (DMQH2). In Ralstonia nicotianae (strain ATCC BAA-1114 / GMI1000) (Ralstonia solanacearum), this protein is Ubiquinone/menaquinone biosynthesis C-methyltransferase UbiE.